The sequence spans 590 residues: Protein O-linked-mannose beta-1,4-N-acetylglucosaminyltransferase 2 (590 aa).

Residues 1–4 lie on the Cytoplasmic side of the membrane; it reads MSVG. A helical; Signal-anchor for type II membrane protein transmembrane segment spans residues 5-25; sequence TLLNGLLVSIVAALLWKYSKL. Over 26–590 the chain is Lumenal; the sequence is SEHAALLEEE…PFADVLMCRT (565 aa). 3 N-linked (GlcNAc...) asparagine glycosylation sites follow: asparagine 98, asparagine 275, and asparagine 553. The Fibronectin type-III domain maps to 494–590; it reads RVRDPQCQTS…PFADVLMCRT (97 aa).

It belongs to the glycosyltransferase 61 family.

The protein localises to the endoplasmic reticulum membrane. The enzyme catalyses 3-O-(alpha-D-mannosyl)-L-threonyl-[protein] + UDP-N-acetyl-alpha-D-glucosamine = 3-O-(N-acetyl-beta-D-glucosaminyl-(1-&gt;4)-alpha-D-mannosyl)-L-threonyl-[protein] + UDP + H(+). It participates in protein modification; protein glycosylation. Functionally, O-linked mannose beta-1,4-N-acetylglucosaminyltransferase that transfers UDP-N-acetyl-D-glucosamine to the 4-position of the mannose to generate N-acetyl-D-glucosamine-beta-1,4-O-D-mannosylprotein. Involved in the biosynthesis of the phosphorylated O-mannosyl trisaccharide (N-acetylgalactosamine-beta-3-N-acetylglucosamine-beta-4-(phosphate-6-)mannose), a carbohydrate structure present in alpha-dystroglycan (DAG1), which is required for binding laminin G-like domain-containing extracellular proteins with high affinity. The sequence is that of Protein O-linked-mannose beta-1,4-N-acetylglucosaminyltransferase 2 (pomgnt2) from Takifugu rubripes (Japanese pufferfish).